Reading from the N-terminus, the 1112-residue chain is Lysylphosphatidylglycerol biosynthesis bifunctional protein LysX (1112 aa).

The interval 1 to 613 (MTLTSPPRTR…VLHHDGTAPD (613 aa)) is phosphatidylglycerol lysyltransferase. 7 consecutive transmembrane segments (helical) span residues 18–38 (VPAAAGWTVGVIATLSLIASV), 60–80 (FPDTSFAWAFVLALLAGALAA), 84–104 (IAWWILLLYMVAAAGWNVADL), 118–138 (VIGLAFHLAAVAFLLLARPLF), 152–172 (GVLAAGMAVGVLVGWGLLELF), 209–229 (VNALLGLFGALALMAAAIVLF), and 308–328 (AWLALCGTYGWAPGVMGASVG). The interval 614–1112 (MSGLRTDTAD…TLPFPLARPR (499 aa)) is lysine--tRNA ligase. A DNA-binding region (OB) is located at residues 675 to 748 (VAGRVLRIRD…GTRSLLVRHW (74 aa)). Asp1024 and Glu1031 together coordinate Mg(2+).

It in the N-terminal section; belongs to the LPG synthetase family. The protein in the C-terminal section; belongs to the class-II aminoacyl-tRNA synthetase family. It depends on Mg(2+) as a cofactor.

The protein localises to the cell membrane. The enzyme catalyses tRNA(Lys) + L-lysine + ATP = L-lysyl-tRNA(Lys) + AMP + diphosphate. It carries out the reaction L-lysyl-tRNA(Lys) + a 1,2-diacyl-sn-glycero-3-phospho-(1'-sn-glycerol) = a 1,2-diacyl-sn-glycero-3-phospho-1'-(3'-O-L-lysyl)-sn-glycerol + tRNA(Lys). Catalyzes the production of L-lysyl-tRNA(Lys)transfer and the transfer of a lysyl group from L-lysyl-tRNA(Lys) to membrane-bound phosphatidylglycerol (PG), which produces lysylphosphatidylglycerol (LPG), one of the components of the bacterial membrane with a positive net charge. LPG synthesis contributes to the resistance to cationic antimicrobial peptides (CAMPs) and likely protects M.tuberculosis against the CAMPs produced by competiting microorganisms (bacteriocins). In fact, the modification of anionic phosphatidylglycerol with positively charged L-lysine results in repulsion of the peptides. This is Lysylphosphatidylglycerol biosynthesis bifunctional protein LysX (lysX) from Mycobacterium sp. (strain KMS).